The chain runs to 137 residues: Hydrogenase-4 component J (137 aa).

It to E.coli HycH.

Its function is as follows. Possible component of hydrogenase 4. In Escherichia coli (strain K12), this protein is Hydrogenase-4 component J.